The chain runs to 228 residues: Endonuclease V (228 aa).

Mg(2+)-binding residues include aspartate 43 and aspartate 109.

Belongs to the endonuclease V family. Mg(2+) serves as cofactor.

It is found in the cytoplasm. It catalyses the reaction Endonucleolytic cleavage at apurinic or apyrimidinic sites to products with a 5'-phosphate.. Its function is as follows. DNA repair enzyme involved in the repair of deaminated bases. Selectively cleaves double-stranded DNA at the second phosphodiester bond 3' to a deoxyinosine leaving behind the intact lesion on the nicked DNA. This chain is Endonuclease V, found in Dictyoglomus thermophilum (strain ATCC 35947 / DSM 3960 / H-6-12).